Reading from the N-terminus, the 169-residue chain is uncharacterized protein (169 aa).

2 disordered regions span residues 32-53 (VSGP…APAP) and 148-169 (VSGS…AGGA).

This is an uncharacterized protein from Homo sapiens (Human).